The primary structure comprises 214 residues: EEF1A lysine methyltransferase 1 (214 aa).

Serine 2 bears the N-acetylserine mark. Serine 2 is modified (phosphoserine).

It belongs to the class I-like SAM-binding methyltransferase superfamily. EFM5 family.

The protein resides in the cytoplasm. The enzyme catalyses L-lysyl-[protein] + 3 S-adenosyl-L-methionine = N(6),N(6),N(6)-trimethyl-L-lysyl-[protein] + 3 S-adenosyl-L-homocysteine + 3 H(+). In terms of biological role, protein-lysine methyltransferase that selectively catalyzes the trimethylation of EEF1A at 'Lys-79'. The sequence is that of EEF1A lysine methyltransferase 1 from Mus musculus (Mouse).